We begin with the raw amino-acid sequence, 561 residues long: Arginine--tRNA ligase (561 aa).

Residues 128 to 138 (ANPTGPLHVGH) carry the 'HIGH' region motif.

This sequence belongs to the class-I aminoacyl-tRNA synthetase family. Monomer.

Its subcellular location is the cytoplasm. The enzyme catalyses tRNA(Arg) + L-arginine + ATP = L-arginyl-tRNA(Arg) + AMP + diphosphate. The protein is Arginine--tRNA ligase of Leptothrix cholodnii (strain ATCC 51168 / LMG 8142 / SP-6) (Leptothrix discophora (strain SP-6)).